Reading from the N-terminus, the 366-residue chain is Chorismate synthase (366 aa).

2 residues coordinate NADP(+): R48 and R54. FMN-binding positions include 131-133 (RAS), 243-244 (NA), G288, 303-307 (KPTPS), and R329.

Belongs to the chorismate synthase family. Homotetramer. The cofactor is FMNH2.

It carries out the reaction 5-O-(1-carboxyvinyl)-3-phosphoshikimate = chorismate + phosphate. It participates in metabolic intermediate biosynthesis; chorismate biosynthesis; chorismate from D-erythrose 4-phosphate and phosphoenolpyruvate: step 7/7. Catalyzes the anti-1,4-elimination of the C-3 phosphate and the C-6 proR hydrogen from 5-enolpyruvylshikimate-3-phosphate (EPSP) to yield chorismate, which is the branch point compound that serves as the starting substrate for the three terminal pathways of aromatic amino acid biosynthesis. This reaction introduces a second double bond into the aromatic ring system. In Bartonella quintana (strain Toulouse) (Rochalimaea quintana), this protein is Chorismate synthase.